The following is a 494-amino-acid chain: WD repeat-containing protein 37 (494 aa).

Residues 1–38 (MPTESGSWAAARQTKQKRKSHSLSIKRTNSSEQDRPGL) are disordered. The span at 22-31 (SLSIKRTNSS) shows a compositional bias: polar residues. WD repeat units lie at residues 154–194 (GHRD…CLIK) and 197–236 (GHAG…PTPQ). Positions 236–266 (QPTADTSISGEEEVDFSDKDENDGDGDASSD) are disordered. A compositionally biased stretch (acidic residues) spans 245 to 263 (GEEEVDFSDKDENDGDGDA). WD repeat units lie at residues 279–318 (SHQG…LVHS), 321–360 (GHDQ…IHSV), 365–403 (GHTD…SPIA), 406–445 (RTDS…LARL), and 452–493 (GHRR…LLQE).

Its subcellular location is the cytoplasm. The protein localises to the nucleus. The sequence is that of WD repeat-containing protein 37 (wdr37) from Xenopus tropicalis (Western clawed frog).